A 181-amino-acid polypeptide reads, in one-letter code: Adenylyl-sulfate kinase (181 aa).

12 to 19 serves as a coordination point for ATP; sequence GLSGAGKS. Residue Ser86 is the Phosphoserine intermediate of the active site.

The protein belongs to the APS kinase family.

It carries out the reaction adenosine 5'-phosphosulfate + ATP = 3'-phosphoadenylyl sulfate + ADP + H(+). It participates in sulfur metabolism; hydrogen sulfide biosynthesis; sulfite from sulfate: step 2/3. Catalyzes the synthesis of activated sulfate. This chain is Adenylyl-sulfate kinase, found in Microcystis aeruginosa (strain NIES-843 / IAM M-2473).